The sequence spans 388 residues: Cell adhesion molecule 4 (388 aa).

The N-terminal stretch at 1 to 20 is a signal peptide; the sequence is MGRARRFQWPLLLLWAAAAG. The 99-residue stretch at 21 to 119 folds into the Ig-like V-type domain; sequence PGAGQEVQTE…DTHHQIATLT (99 aa). Over 21–324 the chain is Extracellular; it reads PGAGQEVQTE…VEAQTSVPYA (304 aa). Residues N31 and N67 are each glycosylated (N-linked (GlcNAc...) asparagine). 3 disulfide bridges follow: C44–C104, C145–C199, and C245–C291. 2 consecutive Ig-like C2-type domains span residues 124-219 and 224-307; these read PENP…YVLD and PTAR…YVLV. N-linked (GlcNAc...) asparagine glycosylation occurs at N286. Residues 325–345 traverse the membrane as a helical segment; sequence IVGGILALLVFLIICVLVGMV. Residues 346 to 388 lie on the Cytoplasmic side of the membrane; that stretch reads WCSVRQKGSYLTHEASGLDEQGEAREAFLNGSDGHKRKEEFFI. S361 bears the Phosphoserine mark.

This sequence belongs to the nectin family. In terms of assembly, monomer and homodimer. In terms of processing, N-glycosylated. In terms of tissue distribution, expressed in brain, prostate, brain, kidney and some other organs.

The protein resides in the membrane. In terms of biological role, involved in the cell-cell adhesion. Has calcium- and magnesium-independent cell-cell adhesion activity. May have tumor-suppressor activity. The chain is Cell adhesion molecule 4 (CADM4) from Homo sapiens (Human).